We begin with the raw amino-acid sequence, 225 residues long: NAD(P)H-quinone oxidoreductase subunit K, chloroplastic (225 aa).

[4Fe-4S] cluster is bound by residues Cys43, Cys44, Cys108, and Cys139.

This sequence belongs to the complex I 20 kDa subunit family. NDH is composed of at least 16 different subunits, 5 of which are encoded in the nucleus. It depends on [4Fe-4S] cluster as a cofactor.

It localises to the plastid. The protein localises to the chloroplast thylakoid membrane. It carries out the reaction a plastoquinone + NADH + (n+1) H(+)(in) = a plastoquinol + NAD(+) + n H(+)(out). The enzyme catalyses a plastoquinone + NADPH + (n+1) H(+)(in) = a plastoquinol + NADP(+) + n H(+)(out). Functionally, NDH shuttles electrons from NAD(P)H:plastoquinone, via FMN and iron-sulfur (Fe-S) centers, to quinones in the photosynthetic chain and possibly in a chloroplast respiratory chain. The immediate electron acceptor for the enzyme in this species is believed to be plastoquinone. Couples the redox reaction to proton translocation, and thus conserves the redox energy in a proton gradient. The protein is NAD(P)H-quinone oxidoreductase subunit K, chloroplastic of Guizotia abyssinica (Niger).